We begin with the raw amino-acid sequence, 498 residues long: ATP synthase subunit beta, chloroplastic (498 aa).

Position 172–179 (172–179) interacts with ATP; sequence GGAGVGKT.

The protein belongs to the ATPase alpha/beta chains family. In terms of assembly, F-type ATPases have 2 components, CF(1) - the catalytic core - and CF(0) - the membrane proton channel. CF(1) has five subunits: alpha(3), beta(3), gamma(1), delta(1), epsilon(1). CF(0) has four main subunits: a(1), b(1), b'(1) and c(9-12).

It localises to the plastid. The protein resides in the chloroplast thylakoid membrane. It catalyses the reaction ATP + H2O + 4 H(+)(in) = ADP + phosphate + 5 H(+)(out). Produces ATP from ADP in the presence of a proton gradient across the membrane. The catalytic sites are hosted primarily by the beta subunits. In Licuala grandis (Ruffled fan palm), this protein is ATP synthase subunit beta, chloroplastic.